Here is an 849-residue protein sequence, read N- to C-terminus: Aminopeptidase N (849 aa).

Residues glutamate 122 and 259-263 (GAMEN) contribute to the substrate site. Histidine 294 lines the Zn(2+) pocket. Glutamate 295 serves as the catalytic Proton acceptor. Positions 298 and 317 each coordinate Zn(2+).

It belongs to the peptidase M1 family. As to quaternary structure, monomer. Zn(2+) is required as a cofactor.

The protein localises to the cytoplasm. The enzyme catalyses Release of an N-terminal amino acid, Xaa-|-Yaa- from a peptide, amide or arylamide. Xaa is preferably Ala, but may be most amino acids including Pro (slow action). When a terminal hydrophobic residue is followed by a prolyl residue, the two may be released as an intact Xaa-Pro dipeptide.. Functionally, aminopeptidase with broad substrate specificity to several peptides. It has more affinity for oligopeptides than for dipeptides. It plays an essential role in the metabolism, it may be involved in nitrogen supply or protein turnover. The sequence is that of Aminopeptidase N (pepN) from Lactococcus lactis subsp. lactis (Streptococcus lactis).